The sequence spans 315 residues: Glycine--tRNA ligase alpha subunit (315 aa).

It belongs to the class-II aminoacyl-tRNA synthetase family. As to quaternary structure, tetramer of two alpha and two beta subunits.

It localises to the cytoplasm. It carries out the reaction tRNA(Gly) + glycine + ATP = glycyl-tRNA(Gly) + AMP + diphosphate. The polypeptide is Glycine--tRNA ligase alpha subunit (Pseudomonas syringae pv. tomato (strain ATCC BAA-871 / DC3000)).